The primary structure comprises 356 residues: S-adenosylmethionine:tRNA ribosyltransferase-isomerase (356 aa).

It belongs to the QueA family. Monomer.

The protein resides in the cytoplasm. The enzyme catalyses 7-aminomethyl-7-carbaguanosine(34) in tRNA + S-adenosyl-L-methionine = epoxyqueuosine(34) in tRNA + adenine + L-methionine + 2 H(+). Its pathway is tRNA modification; tRNA-queuosine biosynthesis. Transfers and isomerizes the ribose moiety from AdoMet to the 7-aminomethyl group of 7-deazaguanine (preQ1-tRNA) to give epoxyqueuosine (oQ-tRNA). The sequence is that of S-adenosylmethionine:tRNA ribosyltransferase-isomerase from Histophilus somni (strain 2336) (Haemophilus somnus).